We begin with the raw amino-acid sequence, 350 residues long: Transmembrane protein 185A (350 aa).

7 helical membrane passes run 16-36 (LIYA…DGII), 41-61 (WAVF…ASVG), 81-101 (FKAM…EVLV), 111-131 (FWLL…AACV), 177-197 (ILMS…VLFL), 211-231 (ITMA…EILL), and 240-260 (AFSC…LMAT). The interval 298–350 (DLHHEDNEETEETPVPEPPKIAPMFRKKARVVITQSPGKYALPPPKLNIEMPD) is mediates interaction with MAP1B.

The protein belongs to the TMEM185 family. In terms of assembly, interacts with MAP1B.

The protein localises to the cell projection. It is found in the dendrite. The protein resides in the membrane. This Pongo abelii (Sumatran orangutan) protein is Transmembrane protein 185A (TMEM185A).